A 325-amino-acid polypeptide reads, in one-letter code: Glutarate 2-hydroxylase (325 aa).

3 residues coordinate Fe cation: His-160, Asp-162, and His-292.

The protein belongs to the glutarate hydroxylase family. In terms of assembly, homotetramer. Fe(2+) is required as a cofactor.

It catalyses the reaction glutarate + 2-oxoglutarate + O2 = (S)-2-hydroxyglutarate + succinate + CO2. It participates in amino-acid degradation. Functionally, acts as an alpha-ketoglutarate-dependent dioxygenase catalyzing hydroxylation of glutarate (GA) to L-2-hydroxyglutarate (L2HG). Functions in a L-lysine degradation pathway that proceeds via cadaverine, glutarate and L-2-hydroxyglutarate. In Salmonella newport (strain SL254), this protein is Glutarate 2-hydroxylase.